Here is a 342-residue protein sequence, read N- to C-terminus: Protein RecA (342 aa).

The protein belongs to the RecA family.

It is found in the cytoplasm. In terms of biological role, can catalyze the hydrolysis of ATP in the presence of single-stranded DNA, the ATP-dependent uptake of single-stranded DNA by duplex DNA, and the ATP-dependent hybridization of homologous single-stranded DNAs. It interacts with LexA causing its activation and leading to its autocatalytic cleavage. This chain is Protein RecA, found in Pectobacterium carotovorum (Erwinia carotovora).